The following is a 337-amino-acid chain: Cytoskeleton protein RodZ (337 aa).

At 1 to 111 (MNTEATHDQN…LGKRRKKRDG (111 aa)) the chain is on the cytoplasmic side. The 53-residue stretch at 19-71 (LRNAREQLGLSQQAVAERLCLKVSTVRDIEEDKAPADLASTFLRGYIRSYARL) folds into the HTH cro/C1-type domain. Positions 30-49 (QQAVAERLCLKVSTVRDIEE) form a DNA-binding region, H-T-H motif. The chain crosses the membrane as a helical; Signal-anchor for type II membrane protein span at residues 112-132 (WLMTFTWLVLFVVIGLSGAWW). Over 133–337 (WQDHKAQQEE…TLNAEQSPAQ (205 aa)) the chain is Periplasmic. Over residues 145–167 (TMADQSSAELSSNSEQGQSVPLN) the composition is skewed to polar residues. The tract at residues 145–236 (TMADQSSAEL…TAATTPDGAA (92 aa)) is disordered. Over residues 168–207 (TSTTTDPATTSTPPASVDTTATNTQTPVVTAPAPAVDPQQ) the composition is skewed to low complexity. Over residues 208–218 (NAVVSPSQANV) the composition is skewed to polar residues. Residues 219–236 (DTAATPAPTAATTPDGAA) show a composition bias toward low complexity.

It belongs to the RodZ family.

It is found in the cell inner membrane. Its function is as follows. Cytoskeletal protein that is involved in cell-shape control through regulation of the length of the long axis. The polypeptide is Cytoskeleton protein RodZ (Escherichia coli O157:H7).